Here is a 180-residue protein sequence, read N- to C-terminus: Shikimate kinase (180 aa).

19–24 (GAGKTT) contacts ATP. Thr-23 serves as a coordination point for Mg(2+). Substrate-binding residues include Asp-41, Arg-65, and Gly-87. An ATP-binding site is contributed by Arg-125. Position 144 (Arg-144) interacts with substrate.

Belongs to the shikimate kinase family. Monomer. It depends on Mg(2+) as a cofactor.

The protein localises to the cytoplasm. The enzyme catalyses shikimate + ATP = 3-phosphoshikimate + ADP + H(+). Its pathway is metabolic intermediate biosynthesis; chorismate biosynthesis; chorismate from D-erythrose 4-phosphate and phosphoenolpyruvate: step 5/7. Functionally, catalyzes the specific phosphorylation of the 3-hydroxyl group of shikimic acid using ATP as a cosubstrate. The protein is Shikimate kinase of Acinetobacter baumannii (strain SDF).